We begin with the raw amino-acid sequence, 61 residues long: Photosystem II reaction center protein K (61 aa).

Positions 1–24 (MPNILSLTCICFNSVIYPTSFFFA) are excised as a propeptide. A helical transmembrane segment spans residues 32 to 52 (IFNPIVDFMPVIPVLFFLLAF).

The protein belongs to the PsbK family. In terms of assembly, PSII is composed of 1 copy each of membrane proteins PsbA, PsbB, PsbC, PsbD, PsbE, PsbF, PsbH, PsbI, PsbJ, PsbK, PsbL, PsbM, PsbT, PsbX, PsbY, PsbZ, Psb30/Ycf12, at least 3 peripheral proteins of the oxygen-evolving complex and a large number of cofactors. It forms dimeric complexes.

The protein resides in the plastid. Its subcellular location is the chloroplast thylakoid membrane. In terms of biological role, one of the components of the core complex of photosystem II (PSII). PSII is a light-driven water:plastoquinone oxidoreductase that uses light energy to abstract electrons from H(2)O, generating O(2) and a proton gradient subsequently used for ATP formation. It consists of a core antenna complex that captures photons, and an electron transfer chain that converts photonic excitation into a charge separation. The protein is Photosystem II reaction center protein K of Oryza nivara (Indian wild rice).